Here is a 297-residue protein sequence, read N- to C-terminus: MRPALSDYRHLASGKVRELYRIDDEHLLFVATDRISAYDHILSSEIPDKGRILTAMSVFFFDLIDAPNHLAGPPDDPRIPEEVLGRALVVRQLEMLPVECVARGYLTGSGLIDYRKTGTLCGLTLPPGLTEASKFAEPLYTPASKAELGLHDENIDFAATVDLVGEKRAAQLRERTLQIYTQGADHALTKGIIIADTKFEFGVDPSGELVLADEVFTPDSSRYWYADAYREGQVQPSYDKQFVRNWLTGPESGWDRAADQPPPPLPAEIVDATRSRYIEAYERISGLSFAEWIGASA.

Belongs to the SAICAR synthetase family.

The catalysed reaction is 5-amino-1-(5-phospho-D-ribosyl)imidazole-4-carboxylate + L-aspartate + ATP = (2S)-2-[5-amino-1-(5-phospho-beta-D-ribosyl)imidazole-4-carboxamido]succinate + ADP + phosphate + 2 H(+). Its pathway is purine metabolism; IMP biosynthesis via de novo pathway; 5-amino-1-(5-phospho-D-ribosyl)imidazole-4-carboxamide from 5-amino-1-(5-phospho-D-ribosyl)imidazole-4-carboxylate: step 1/2. This Mycobacterium sp. (strain KMS) protein is Phosphoribosylaminoimidazole-succinocarboxamide synthase.